We begin with the raw amino-acid sequence, 90 residues long: YcgL domain-containing protein YE2368 (90 aa).

Positions Met1 to Leu85 constitute a YcgL domain.

The protein is YcgL domain-containing protein YE2368 of Yersinia enterocolitica serotype O:8 / biotype 1B (strain NCTC 13174 / 8081).